Consider the following 378-residue polypeptide: Chaperone protein DnaJ (378 aa).

Residues 5–69 enclose the J domain; that stretch reads EYYDRLGVSK…QKRAAYDQYG (65 aa). The segment at 134–216 adopts a CR-type zinc-finger fold; that stretch reads GVEKEVSYNR…CHGTGHEKQA (83 aa). Residues C147, C150, C164, C167, C190, C193, C204, and C207 each contribute to the Zn(2+) site. 4 CXXCXGXG motif repeats span residues 147–154, 164–171, 190–197, and 204–211; these read CGTCLGSG, CRKCHGSG, CDICHGSG, and CQTCHGTG.

It belongs to the DnaJ family. In terms of assembly, homodimer. The cofactor is Zn(2+).

It localises to the cytoplasm. Functionally, participates actively in the response to hyperosmotic and heat shock by preventing the aggregation of stress-denatured proteins and by disaggregating proteins, also in an autonomous, DnaK-independent fashion. Unfolded proteins bind initially to DnaJ; upon interaction with the DnaJ-bound protein, DnaK hydrolyzes its bound ATP, resulting in the formation of a stable complex. GrpE releases ADP from DnaK; ATP binding to DnaK triggers the release of the substrate protein, thus completing the reaction cycle. Several rounds of ATP-dependent interactions between DnaJ, DnaK and GrpE are required for fully efficient folding. Also involved, together with DnaK and GrpE, in the DNA replication of plasmids through activation of initiation proteins. This is Chaperone protein DnaJ from Streptococcus pyogenes serotype M6 (strain ATCC BAA-946 / MGAS10394).